The chain runs to 950 residues: Leucine--tRNA ligase (950 aa).

Positions 72–83 match the 'HIGH' region motif; the sequence is PYPSGEGLHVGH. A 'KMSKS' region motif is present at residues 722–726; the sequence is KIGKS. K725 is an ATP binding site.

Belongs to the class-I aminoacyl-tRNA synthetase family.

The protein resides in the cytoplasm. The catalysed reaction is tRNA(Leu) + L-leucine + ATP = L-leucyl-tRNA(Leu) + AMP + diphosphate. The sequence is that of Leucine--tRNA ligase from Mycobacterium sp. (strain JLS).